We begin with the raw amino-acid sequence, 679 residues long: Glycine--tRNA ligase beta subunit (679 aa).

It belongs to the class-II aminoacyl-tRNA synthetase family. Tetramer of two alpha and two beta subunits.

Its subcellular location is the cytoplasm. It carries out the reaction tRNA(Gly) + glycine + ATP = glycyl-tRNA(Gly) + AMP + diphosphate. This Bacillus subtilis (strain 168) protein is Glycine--tRNA ligase beta subunit (glyS).